A 192-amino-acid polypeptide reads, in one-letter code: UPF0149 protein VIBHAR_03551 (192 aa).

The protein belongs to the UPF0149 family.

This chain is UPF0149 protein VIBHAR_03551, found in Vibrio campbellii (strain ATCC BAA-1116).